A 320-amino-acid polypeptide reads, in one-letter code: Alpha/beta hydrolase domain-containing protein 17C (320 aa).

A disordered region spans residues 50-75 (RAPAPAATPAPAPAAQPAPAEEGAGP). The span at 55 to 65 (AATPAPAPAAQ) shows a compositional bias: pro residues. Active-site charge relay system residues include S202, D267, and H296.

It belongs to the AB hydrolase superfamily. ABHD17 family. Post-translationally, palmitoylated on cysteine residues located in a cysteine cluster at the N-terminus which promotes membrane localization. Palmitoylation is required for post-synaptic localization and for depalmitoylating activity towards DLG4/PSD95.

Its subcellular location is the recycling endosome membrane. The protein resides in the cell projection. The protein localises to the dendritic spine. It localises to the postsynaptic density membrane. The enzyme catalyses S-hexadecanoyl-L-cysteinyl-[protein] + H2O = L-cysteinyl-[protein] + hexadecanoate + H(+). Hydrolyzes fatty acids from S-acylated cysteine residues in proteins. Has depalmitoylating activity towards DLG4/PSD95. The chain is Alpha/beta hydrolase domain-containing protein 17C from Mus musculus (Mouse).